A 153-amino-acid polypeptide reads, in one-letter code: Large ribosomal subunit protein bL9 (153 aa).

The protein belongs to the bacterial ribosomal protein bL9 family.

Its function is as follows. Binds to the 23S rRNA. This is Large ribosomal subunit protein bL9 from Micrococcus luteus (strain ATCC 4698 / DSM 20030 / JCM 1464 / CCM 169 / CCUG 5858 / IAM 1056 / NBRC 3333 / NCIMB 9278 / NCTC 2665 / VKM Ac-2230) (Micrococcus lysodeikticus).